A 385-amino-acid polypeptide reads, in one-letter code: Probable splicing factor YJU2B (385 aa).

The segment at 1 to 26 is disordered; the sequence is MGERKGQNKYYPPDFNPEKHGSLNRY. Ser40 bears the Phosphoserine mark. Residues 182-214 are a coiled coil; it reads LNSMLRRHFREKKKAMQEEEEKDQALQAKASLA. The interval 257 to 385 is disordered; sequence PSAQGPSASS…VADYSDSESE (129 aa). Positions 258-271 are enriched in low complexity; sequence SAQGPSASSSKASS. Ser306 carries the post-translational modification Phosphoserine. Polar residues predominate over residues 359 to 373; sequence GSSQEDLLNPNTPNA.

It belongs to the CWC16 family.

The protein localises to the nucleus. In terms of biological role, may be involved in mRNA splicing. The polypeptide is Probable splicing factor YJU2B (Yju2b) (Mus musculus (Mouse)).